The chain runs to 396 residues: Serine/threonine-protein kinase 32A (396 aa).

Gly-2 carries the N-myristoyl glycine lipid modification. The region spanning 23–281 is the Protein kinase domain; that stretch reads FEILRAIGKG…LSDVQNFPYM (259 aa). Residues 29–37 and Lys-52 each bind ATP; that span reads IGKGSFGKV. The Proton acceptor role is filled by Asp-146. Residues 373–396 are disordered; sequence KRQPNLALEQTKDPQGEDGQNNNL.

It belongs to the protein kinase superfamily. Ser/Thr protein kinase family. It depends on Mg(2+) as a cofactor.

Its subcellular location is the cell membrane. The enzyme catalyses L-seryl-[protein] + ATP = O-phospho-L-seryl-[protein] + ADP + H(+). It catalyses the reaction L-threonyl-[protein] + ATP = O-phospho-L-threonyl-[protein] + ADP + H(+). In Homo sapiens (Human), this protein is Serine/threonine-protein kinase 32A (STK32A).